The following is a 254-amino-acid chain: 3-deoxy-manno-octulosonate cytidylyltransferase (254 aa).

Belongs to the KdsB family.

The protein resides in the cytoplasm. It carries out the reaction 3-deoxy-alpha-D-manno-oct-2-ulosonate + CTP = CMP-3-deoxy-beta-D-manno-octulosonate + diphosphate. It participates in nucleotide-sugar biosynthesis; CMP-3-deoxy-D-manno-octulosonate biosynthesis; CMP-3-deoxy-D-manno-octulosonate from 3-deoxy-D-manno-octulosonate and CTP: step 1/1. Its pathway is bacterial outer membrane biogenesis; lipopolysaccharide biosynthesis. Its function is as follows. Activates KDO (a required 8-carbon sugar) for incorporation into bacterial lipopolysaccharide in Gram-negative bacteria. This is 3-deoxy-manno-octulosonate cytidylyltransferase from Chlamydia felis (strain Fe/C-56) (Chlamydophila felis).